We begin with the raw amino-acid sequence, 344 residues long: Biotin synthase (344 aa).

Residues 36–260 (NQIQISTLLS…MMPTSYIRLS (225 aa)) form the Radical SAM core domain. Residues cysteine 51, cysteine 55, and cysteine 58 each coordinate [4Fe-4S] cluster. The [2Fe-2S] cluster site is built by cysteine 95, cysteine 126, cysteine 186, and arginine 258.

It belongs to the radical SAM superfamily. Biotin synthase family. In terms of assembly, homodimer. [4Fe-4S] cluster serves as cofactor. It depends on [2Fe-2S] cluster as a cofactor.

It catalyses the reaction (4R,5S)-dethiobiotin + (sulfur carrier)-SH + 2 reduced [2Fe-2S]-[ferredoxin] + 2 S-adenosyl-L-methionine = (sulfur carrier)-H + biotin + 2 5'-deoxyadenosine + 2 L-methionine + 2 oxidized [2Fe-2S]-[ferredoxin]. Its pathway is cofactor biosynthesis; biotin biosynthesis; biotin from 7,8-diaminononanoate: step 2/2. Its function is as follows. Catalyzes the conversion of dethiobiotin (DTB) to biotin by the insertion of a sulfur atom into dethiobiotin via a radical-based mechanism. The sequence is that of Biotin synthase from Buchnera aphidicola subsp. Baizongia pistaciae (strain Bp).